Reading from the N-terminus, the 309-residue chain is NAD kinase (309 aa).

The active-site Proton acceptor is Asp89. NAD(+)-binding positions include 89-90 (DG), 163-164 (NE), His174, Arg191, Asp193, and 204-209 (TAYALS).

It belongs to the NAD kinase family. It depends on a divalent metal cation as a cofactor.

The protein localises to the cytoplasm. The catalysed reaction is NAD(+) + ATP = ADP + NADP(+) + H(+). Functionally, involved in the regulation of the intracellular balance of NAD and NADP, and is a key enzyme in the biosynthesis of NADP. Catalyzes specifically the phosphorylation on 2'-hydroxyl of the adenosine moiety of NAD to yield NADP. This Shewanella sp. (strain MR-4) protein is NAD kinase.